A 669-amino-acid chain; its full sequence is Protein fem-1 homolog A (669 aa).

7 ANK repeats span residues 2-31 (DLRTAVYNAARDGKLQLLQKLLSGRSREEL), 40-70 (GGGTPLLIAARYGHLDVVEYLVDRCGASVEA), 82-111 (EGAPPLWAASAAGHLDVVRSLLRRGASVNR), 115-145 (TNSTPLRAACFDGHLEVVRYLVGEHQADLEV), 149-178 (HGHTCLMISCYKGHREIARYLLEQGAQVNR), 182-211 (KGNTALHDCAESGSLEILQLLLGCKARMER), and 214-243 (YGMTPLLAASVTGHTNIVEYLIQEQPGQEQ). A Phosphoserine modification is found at Ser-108. Residues 240–278 (GQEQVAGGEAQPGLPQEDPSTSQGCAQPQGAPCCSSSPE) form a disordered region. 2 TPR repeats span residues 298–332 (VEALELLGATYVDKKRDLLGALKHWRRAMELRHQG) and 390–423 (SYYIRYRGAVYADSGNFERCIRLWKYALDMQQSN). ANK repeat units lie at residues 534 to 576 (NGFT…DPDS) and 580 to 609 (DNNTPLHIAAQNNCPAIMNALIEAGAHMDA).

Belongs to the fem-1 family. In terms of assembly, component of a CRL2 E3 ubiquitin-protein ligase complex, also named ECS (Elongin BC-CUL2/5-SOCS-box protein) complex, composed of CUL2, Elongin BC (ELOB and ELOC), RBX1 and substrate-specific adapter FEM1A. Interacts with PTGER4. Interacts with NFKB1; the interaction is direct. Post-translationally, phosphorylated; highly phosphorylated in myoblasts and myotubes. Phosphorylation at Ser-108 promotes PGE2-EP4-mediated inhibition of inflammation. Dephosphorylated by protein phosphatase 2A (PP2A). Present in macrophages derived from peripheral blood monocytes. Also present in atheromata (at protein level).

It is found in the mitochondrion. It localises to the cytoplasm. It participates in protein modification; protein ubiquitination. In terms of biological role, substrate-recognition component of a Cul2-RING (CRL2) E3 ubiquitin-protein ligase complex of the DesCEND (destruction via C-end degrons) pathway, which recognizes a C-degron located at the extreme C terminus of target proteins, leading to their ubiquitination and degradation. The C-degron recognized by the DesCEND pathway is usually a motif of less than ten residues and can be present in full-length proteins, truncated proteins or proteolytically cleaved forms. The CRL2(FEM1A) complex specifically recognizes proteins with an arginine at the C-terminus: recognizes and binds proteins ending with -Lys/Arg-Xaa-Arg and -Lys/Arg-Xaa-Xaa-Arg C-degrons, such as SIL1 or OR51B2, leading to their ubiquitination and degradation. Promotes ubiquitination and degradation of SLBP. Involved in PGE2-EP4-mediated inhibition of inflammation of macrophages via interaction with NFKB1 and PTGER4. Promotes inflammation in brain microglia through MAP2K4/MKK4-mediated signaling. This is Protein fem-1 homolog A from Homo sapiens (Human).